Here is a 538-residue protein sequence, read N- to C-terminus: Exo-alpha-bergamotene synthase (538 aa).

Asp291, Asp295, Asp435, Thr439, and Glu443 together coordinate Mg(2+). The DDXXD motif motif lies at 291 to 295; it reads DDIYD.

This sequence belongs to the terpene synthase family. Mg(2+) serves as cofactor. It depends on Mn(2+) as a cofactor.

The enzyme catalyses (2E,6E)-farnesyl diphosphate = (1S,5S,6R)-alpha-bergamotene + diphosphate. In terms of biological role, catalyzes a mixture of sesquiterpenoids from (2E,6E)-farnesyl diphosphate. Catalyzes the formation of exo-alpha-bergamotene, as well as (E)-nerolidol, (Z)-alpha-bisabolene, (E)-beta-farnesene and beta-sesquiphellandrene. Also has activity towards geranyl diphosphate, but to a much lesser extent. In Lavandula angustifolia (Lavender), this protein is Exo-alpha-bergamotene synthase.